A 140-amino-acid polypeptide reads, in one-letter code: Profilin (140 aa).

Ser-2 carries the post-translational modification N-acetylserine.

It belongs to the profilin family. In terms of assembly, occurs in many kinds of cells as a complex with monomeric actin in a 1:1 ratio.

The protein localises to the cytoplasm. It localises to the cytoskeleton. Its function is as follows. Binds to actin and affects the structure of the cytoskeleton. At high concentrations, profilin prevents the polymerization of actin, whereas it enhances it at low concentrations. By binding to PIP2, it inhibits the formation of IP3 and DG. This Heliocidaris crassispina (Sea urchin) protein is Profilin.